The primary structure comprises 78 residues: Short neurotoxin OH-46 (78 aa).

The signal sequence occupies residues 1 to 21 (MKNLLLTFLVVTIVCLDLGYT). 4 disulfide bridges follow: Cys-24/Cys-40, Cys-33/Cys-58, Cys-62/Cys-70, and Cys-71/Cys-76.

The protein belongs to the three-finger toxin family. Short-chain subfamily. Expressed by the venom gland.

The protein resides in the secreted. This three-finger toxin binds and inhibits the nicotinic acetylcholine receptor (nAChR). In Ophiophagus hannah (King cobra), this protein is Short neurotoxin OH-46.